Here is a 111-residue protein sequence, read N- to C-terminus: Iron-sulfur cluster assembly protein CyaY (111 aa).

The protein belongs to the frataxin family.

In terms of biological role, involved in iron-sulfur (Fe-S) cluster assembly. May act as a regulator of Fe-S biogenesis. In Cupriavidus pinatubonensis (strain JMP 134 / LMG 1197) (Cupriavidus necator (strain JMP 134)), this protein is Iron-sulfur cluster assembly protein CyaY.